A 507-amino-acid chain; its full sequence is Subtilisin-like protease 1 (507 aa).

Residues 1–19 (MGVFRFISISLAAVSAANA) form the signal peptide. Positions 20–116 (AQILSMPHAQ…VEPDTIISVN (97 aa)) are excised as a propeptide. The 80-residue stretch at 34–113 (SYIVMMKDDT…VMFVEPDTII (80 aa)) folds into the Inhibitor I9 domain. The Peptidase S8 domain occupies 126–400 (SWGLARISNS…NVLISNGGAK (275 aa)). Catalysis depends on charge relay system residues Asp158 and His190. A disordered region spans residues 175–198 (GSNQVNDGDDRDGSGHGTHTSGTM). Asn251 is a glycosylation site (N-linked (GlcNAc...) asparagine). Residues 282–294 (NENQDARSSSPAS) are compositionally biased toward polar residues. Positions 282-312 (NENQDARSSSPASEPSVCTVGSSAEDDSRSS) are disordered. Catalysis depends on Ser345, which acts as the Charge relay system. Residues 378–394 (SSSITDVGPGTPTNVLI) show a composition bias toward polar residues. Residues 378–486 (SSSITDVGPG…YPGGDNFDFD (109 aa)) are disordered. Pro residues-rich tracts occupy residues 405–428 (KPAPGPSPNPSQPSEPQQPAPSQP) and 438–449 (EPFPGEPFPGEP). Over residues 450–461 (FPGESSPGESAP) the composition is skewed to low complexity. Residues 462-476 (APAPMPPSPQHPHTP) are compositionally biased toward pro residues.

It belongs to the peptidase S8 family.

The protein localises to the secreted. Functionally, secreted subtilisin-like serine protease with keratinolytic activity that contributes to pathogenicity. The polypeptide is Subtilisin-like protease 1 (SUB1) (Trichophyton tonsurans (Scalp ringworm fungus)).